Consider the following 977-residue polypeptide: ATP-dependent RNA helicase DBP10 (977 aa).

The interval 1–121 (MGIISKRKRH…NSEKSKHKKG (121 aa)) is disordered. Residues 26 to 35 (ITSNIGLNTA) show a composition bias toward polar residues. Residues 37 to 61 (SSDESESSGDDEEEVQDIVDFSDEE) are compositionally biased toward acidic residues. The span at 70-81 (SNKTLTDNNSFP) shows a compositional bias: polar residues. Residues 121 to 149 (GSFPSFGFSKLILSNVHKKGFRQPTPIQR) carry the Q motif motif. In terms of domain architecture, Helicase ATP-binding spans 152–324 (IPLILQKRDI…KAGLTNPVLV (173 aa)). 165-172 (ARTGSGKT) lines the ATP pocket. The short motif at 272–275 (DEAD) is the DEAD box element. Disordered regions lie at residues 377–403 (NKSL…KKGK) and 871–977 (KTGA…KRKF). Residues 394–403 (QNSRKSKKGK) are compositionally biased toward basic residues. A Helicase C-terminal domain is found at 403 to 554 (KFQKLKVSAS…SMYEASCKLM (152 aa)). The span at 878–894 (SIPTNLLSDPTTDSGSQ) shows a compositional bias: polar residues. A compositionally biased stretch (basic and acidic residues) spans 910–921 (RLPDKFRDDYQS). Over residues 961 to 977 (KEKKRQKNARPTKKRKF) the composition is skewed to basic residues.

It belongs to the DEAD box helicase family. DDX54/DBP10 subfamily.

The protein resides in the nucleus. Its subcellular location is the nucleolus. The catalysed reaction is ATP + H2O = ADP + phosphate + H(+). In terms of biological role, ATP-binding RNA helicase involved in the biogenesis of 60S ribosomal subunits and is required for the normal formation of 25S and 5.8S rRNAs. In Vanderwaltozyma polyspora (strain ATCC 22028 / DSM 70294 / BCRC 21397 / CBS 2163 / NBRC 10782 / NRRL Y-8283 / UCD 57-17) (Kluyveromyces polysporus), this protein is ATP-dependent RNA helicase DBP10 (DBP10).